The primary structure comprises 169 residues: Spore protein SP21 (169 aa).

Disordered stretches follow at residues 1-21 and 150-169; these read MADL…REWD and QPKR…HIKA. The sHSP domain maps to 47–159; it reads QGPPAFVPAF…QPKRIQVASS (113 aa).

This sequence belongs to the small heat shock protein (HSP20) family.

Functionally, may stabilize cellular components during stress and spore formation. This Stigmatella aurantiaca (strain DW4/3-1) protein is Spore protein SP21 (hspA).